Reading from the N-terminus, the 431-residue chain is 3-isopropylmalate dehydratase large subunit (431 aa).

The [4Fe-4S] cluster site is built by Cys-300, Cys-360, and Cys-363.

The protein belongs to the aconitase/IPM isomerase family. LeuC type 2 subfamily. In terms of assembly, heterodimer of LeuC and LeuD. [4Fe-4S] cluster is required as a cofactor.

The enzyme catalyses (2R,3S)-3-isopropylmalate = (2S)-2-isopropylmalate. It participates in amino-acid biosynthesis; L-leucine biosynthesis; L-leucine from 3-methyl-2-oxobutanoate: step 2/4. Functionally, catalyzes the isomerization between 2-isopropylmalate and 3-isopropylmalate, via the formation of 2-isopropylmaleate. The polypeptide is 3-isopropylmalate dehydratase large subunit (Sulfurihydrogenibium sp. (strain YO3AOP1)).